A 753-amino-acid chain; its full sequence is Nigerose phosphorylase (753 aa).

W348–D349 lines the substrate pocket. The Proton donor role is filled by E490. Position 604–605 (K604–Q605) interacts with substrate.

This sequence belongs to the glycosyl hydrolase 65 family. As to quaternary structure, homodimer.

The protein resides in the cytoplasm. The enzyme catalyses nigerose + phosphate = beta-D-glucose 1-phosphate + D-glucose. With respect to regulation, does not require divalent metal ions. Catalyzes the reversible phosphorolysis of nigerose. Also shows a weak activity on kojibiose. The protein is Nigerose phosphorylase of Lachnoclostridium phytofermentans (strain ATCC 700394 / DSM 18823 / ISDg) (Clostridium phytofermentans).